Reading from the N-terminus, the 611-residue chain is Putative type II restriction enzyme HgiDII (611 aa).

A compositionally biased stretch (basic and acidic residues) spans 355–364 (YPSNPKKEEV). The disordered stretch occupies residues 355–434 (YPSNPKKEEV…PEPSPPPKQE (80 aa)). A compositionally biased stretch (low complexity) spans 381–409 (TNASSDSSTATENASSDSSTATENASSET). A run of 2 repeats spans residues 382 to 392 (NASSDSSTATE) and 393 to 403 (NASSDSSTATE). A 2.5 X 11 AA tandem repeats region spans residues 382–403 (NASSDSSTATENASSDSSTATE). Residues 404–409 (NASSET) form a 3; truncated repeat. The span at 410 to 425 (NDGEVEDNSFFDDDIP) shows a compositional bias: acidic residues.

It carries out the reaction Endonucleolytic cleavage of DNA to give specific double-stranded fragments with terminal 5'-phosphates.. Functionally, according to REBASE this is a P subtype restriction enzyme that recognizes the double-stranded sequence 5'-GTCGAC-3' and cleaves after G-1. No restriction activity was detected upon overexpressing this protein in E.coli. The chain is Putative type II restriction enzyme HgiDII from Herpetosiphon aurantiacus (Herpetosiphon giganteus).